The primary structure comprises 150 residues: UPF0756 membrane protein NTHI1233 (150 aa).

4 helical membrane passes run 1–21, 52–72, 81–101, and 123–143; these read MTLQLNTIALLLVILLILGVL, YGVKIGIIILTIGVLSPLVSG, GFLSWKMALSIAVGVLVAWLA, and IIGVAFLGGIPVGPLIAAGIL.

This sequence belongs to the UPF0756 family.

The protein resides in the cell membrane. This chain is UPF0756 membrane protein NTHI1233, found in Haemophilus influenzae (strain 86-028NP).